A 352-amino-acid polypeptide reads, in one-letter code: DNA polymerase IV (352 aa).

Residues 4 to 185 (IIHVDMDCFF…LPLSKIPGVG (182 aa)) form the UmuC domain. Asp8 and Asp103 together coordinate Mg(2+). Glu104 is an active-site residue.

Belongs to the DNA polymerase type-Y family. In terms of assembly, monomer. The cofactor is Mg(2+).

The protein resides in the cytoplasm. It catalyses the reaction DNA(n) + a 2'-deoxyribonucleoside 5'-triphosphate = DNA(n+1) + diphosphate. Its function is as follows. Poorly processive, error-prone DNA polymerase involved in untargeted mutagenesis. Copies undamaged DNA at stalled replication forks, which arise in vivo from mismatched or misaligned primer ends. These misaligned primers can be extended by PolIV. Exhibits no 3'-5' exonuclease (proofreading) activity. May be involved in translesional synthesis, in conjunction with the beta clamp from PolIII. This is DNA polymerase IV from Yersinia pestis bv. Antiqua (strain Antiqua).